The sequence spans 52 residues: MEKVQYLTRSAIRRASTIEMPQQARQNLQNLFINFCLILICLLLICIIVMLL.

Residue Met1 is modified to N-acetylmethionine. Topologically, residues 1-31 (MEKVQYLTRSAIRRASTIEMPQQARQNLQNL) are cytoplasmic. Ser16 bears the Phosphoserine; by PKA mark. Phosphothreonine; by CaMK2 is present on Thr17. Residues 32-52 (FINFCLILICLLLICIIVMLL) form a helical membrane-spanning segment. The S-palmitoyl cysteine moiety is linked to residue Cys36.

This sequence belongs to the phospholamban family. As to quaternary structure, homopentamer. Can also form heterooligomers with other sarcoplasmic/endoplasmic reticulum calcium ATPase (SERCA) regulators ARLN, ERLN, SLN and STRIT1/DWORF. Monomer. Interacts with HAX1. Interacts as a monomer with ATP2A2; the interaction decreases ATP2A2 Ca(2+) affinity. Interacts with VMP1; VMP1 competes with PLN and SLN to prevent them from forming an inhibitory complex with ATP2A2. Interacts with S100A1 in a Ca(2+)-dependent manner. In terms of processing, phosphorylated at Thr-17 by CaMK2, and in response to beta-adrenergic stimulation. Phosphorylation by DMPK may stimulate sarcoplasmic reticulum calcium uptake in cardiomyocytes. Phosphorylation by PKA abolishes the inhibition of ATP2A2-mediated calcium uptake. Post-translationally, palmitoylated by ZDHHC16, promoting formation of the homopentamer. In elongated spermatids, proteolytically cleaved by SPPL2C which modulates intracellular Ca(2+) homeostasis. Expressed in testis (at protein level). In brain, expressed specifically in GABAergic GAD67+ neurons of the thalamic reticular nucleus where it colocalizes with ATP2A2/SERCA2 (at protein level). Expressed in the bladder and in the atria and ventricles of the heart.

The protein localises to the endoplasmic reticulum membrane. Its subcellular location is the sarcoplasmic reticulum membrane. It localises to the mitochondrion membrane. The protein resides in the membrane. Reversibly inhibits the activity of ATP2A2/SERCA2 in cardiac sarcoplasmic reticulum by decreasing the apparent affinity of the ATPase for Ca(2+). Binds preferentially to the ATP-bound E1 conformational form of ATP2A2 which predominates at low Ca(2+) concentrations during the diastolic phase of the cardiac cycle. Inhibits ATP2A2 Ca(2+) affinity by disrupting its allosteric activation by ATP. Modulates the contractility of the heart muscle in response to physiological stimuli via its effects on ATP2A2. Modulates calcium re-uptake during muscle relaxation and plays an important role in calcium homeostasis in the heart muscle. The degree of ATP2A2 inhibition depends on the oligomeric state of PLN. ATP2A2 inhibition is alleviated by PLN phosphorylation. Also inhibits the activity of ATP2A3/SERCA3. Controls intracellular Ca(2+) levels in elongated spermatids and may play a role in germ cell differentiation. In the thalamic reticular nucleus of the brain, plays a role in the regulation of sleep patterns and executive functioning. This is Phospholamban from Mus musculus (Mouse).